The sequence spans 73 residues: UPF0352 protein HSM_0097 (73 aa).

It belongs to the UPF0352 family.

This chain is UPF0352 protein HSM_0097, found in Histophilus somni (strain 2336) (Haemophilus somnus).